Here is a 280-residue protein sequence, read N- to C-terminus: SLGSSTLLQSQISGFGGSQKLQKISFSNPNSLTFTRRRIQTVVNASSRVDKFSKSDIIVSPSILSANFSKLGEQVKAIEQAGCDWIHVDVMDGRFVPNITIGPLVVDSLRPITDLPLDVHLMIVEPDQRVPDFIKAGADIVSVHCEQSSTIHLHRTINQIKSLGAKAGVVLNPGTPLTAIEYVLDAVDLVLIMSVNPGFGGQSFIESQVKKISDLRKICAERGLNPWIEVDGGVGPKNAYKVIEAGANALVAGSAVFGAPDYAEAIKGIKTSKRPEAVAV.

A chloroplast-targeting transit peptide spans 1-45; the sequence is SLGSSTLLQSQISGFGGSQKLQKISFSNPNSLTFTRRRIQTVVNA. Serine 62 is a substrate binding site. 3 residues coordinate a divalent metal cation: histidine 87, aspartate 89, and histidine 120. The active-site Proton acceptor is aspartate 89. Substrate is bound by residues histidine 120, 198-201, 231-233, and 253-254; these read GFGG, DGG, and GS. A divalent metal cation is bound at residue aspartate 231. The active-site Proton donor is the aspartate 231.

It belongs to the ribulose-phosphate 3-epimerase family. As to quaternary structure, homohexamer. The cofactor is Co(2+). Fe(2+) is required as a cofactor. Requires Mn(2+) as cofactor. It depends on Zn(2+) as a cofactor. Highest level of expression in leaves, whereas it is low in roots, tubers, and stems.

It localises to the plastid. The protein localises to the chloroplast thylakoid membrane. The catalysed reaction is D-ribulose 5-phosphate = D-xylulose 5-phosphate. It functions in the pathway carbohydrate biosynthesis; Calvin cycle. Its function is as follows. Catalyzes the reversible epimerization of D-ribulose 5-phosphate to D-xylulose 5-phosphate. The protein is Ribulose-phosphate 3-epimerase, chloroplastic of Solanum tuberosum (Potato).